The sequence spans 622 residues: Wall-associated receptor kinase-like 21 (622 aa).

The N-terminal stretch at 1–21 is a signal peptide; it reads MAETPQPYLIFVFFVFTLTVA. The Extracellular portion of the chain corresponds to 22–247; that stretch reads TQTTGSVKCK…LVYKRKGLHK (226 aa). 5 N-linked (GlcNAc...) asparagine glycosylation sites follow: asparagine 50, asparagine 114, asparagine 131, asparagine 160, and asparagine 195. The chain crosses the membrane as a helical span at residues 248 to 268; that stretch reads LVVLGTAGILVGVLVIVVLIA. The Cytoplasmic portion of the chain corresponds to 269–622; sequence TYFFRNKQSA…MKRQQSFPRE (354 aa). In terms of domain architecture, Protein kinase spans 314–594; it reads FSDKNMLGTG…EITEDLHRIK (281 aa). Residues 320 to 328 and lysine 342 contribute to the ATP site; that span reads LGTGAYGTV. Aspartate 439 (proton acceptor) is an active-site residue.

Belongs to the protein kinase superfamily. Ser/Thr protein kinase family.

It localises to the membrane. The enzyme catalyses L-seryl-[protein] + ATP = O-phospho-L-seryl-[protein] + ADP + H(+). The catalysed reaction is L-threonyl-[protein] + ATP = O-phospho-L-threonyl-[protein] + ADP + H(+). Serine/threonine-protein kinase that may function as a signaling receptor of extracellular matrix component. The sequence is that of Wall-associated receptor kinase-like 21 (WAKL21) from Arabidopsis thaliana (Mouse-ear cress).